Here is a 169-residue protein sequence, read N- to C-terminus: Thiol peroxidase (169 aa).

A Thioredoxin domain is found at 19–167 (LKVGDRAPEA…YDEVVNKVKE (149 aa)). The Cysteine sulfenic acid (-SOH) intermediate role is filled by Cys61. Cys61 and Cys95 are joined by a disulfide.

This sequence belongs to the peroxiredoxin family. Tpx subfamily. In terms of assembly, homodimer.

The catalysed reaction is a hydroperoxide + [thioredoxin]-dithiol = an alcohol + [thioredoxin]-disulfide + H2O. In terms of biological role, thiol-specific peroxidase that catalyzes the reduction of hydrogen peroxide and organic hydroperoxides to water and alcohols, respectively. Plays a role in cell protection against oxidative stress by detoxifying peroxides. This is Thiol peroxidase from Aquifex aeolicus (strain VF5).